The chain runs to 90 residues: Cell division topological specificity factor (90 aa).

The protein belongs to the MinE family.

Functionally, prevents the cell division inhibition by proteins MinC and MinD at internal division sites while permitting inhibition at polar sites. This ensures cell division at the proper site by restricting the formation of a division septum at the midpoint of the long axis of the cell. This Bordetella avium (strain 197N) protein is Cell division topological specificity factor.